The sequence spans 104 residues: Probable monothiol glutaredoxin 2 (104 aa).

The 98-residue stretch at 7–104 (FEFIENEIKN…NGELEKMLKG (98 aa)) folds into the Glutaredoxin domain. Lys24 is a glutathione binding site. A [2Fe-2S] cluster-binding site is contributed by Cys32. Glutathione is bound by residues Arg61, Phe73, and 86 to 87 (CD).

This sequence belongs to the glutaredoxin family. Monothiol subfamily.

This Rickettsia felis (strain ATCC VR-1525 / URRWXCal2) (Rickettsia azadi) protein is Probable monothiol glutaredoxin 2 (grxC2).